The sequence spans 403 residues: Prostaglandin E2 receptor EP1 subtype (403 aa).

The Extracellular portion of the chain corresponds to 1-38; sequence MSLCGPLNLSLAGEATPCAEPGAPNASAWPPSGRASAS. N-linked (GlcNAc...) asparagine glycans are attached at residues Asn8 and Asn25. A helical membrane pass occupies residues 39–65; the sequence is PALPIFSMTLGAVSNVLALALLAQAAG. The Cytoplasmic portion of the chain corresponds to 66-75; it reads RLRRRRSAAT. Residues 76–99 form a helical membrane-spanning segment; it reads FLLFVASLLATDLAGHVIPGALVL. The Extracellular segment spans residues 100–114; it reads RLYAAGRSPAGGACH. Cys113 and Cys191 are disulfide-bonded. The helical transmembrane segment at 115-136 threads the bilayer; it reads FLGGCMVFFGLCPLLLGCGMAV. The Cytoplasmic portion of the chain corresponds to 137–158; the sequence is ERCVGVTRPLLHAARVSAARAR. Residues 159–180 traverse the membrane as a helical segment; it reads LALAVLAALALAVALLPLARVG. At 181-204 the chain is on the extracellular side; the sequence is RYELQYPGTWCFIGLRPAGGWRQA. Residues 205–230 traverse the membrane as a helical segment; that stretch reads LLAGLFAGLGLAALLAALVCNTLSGL. The Cytoplasmic segment spans residues 231 to 295; sequence ALLRARWRRR…ARRARAHDVE (65 aa). The segment at 243–287 is disordered; sequence RRRPQACGPDGRRHWGARAPRSASASSSSSVASVPGGSPGRGSAR. Residues 259 to 278 are compositionally biased toward low complexity; sequence ARAPRSASASSSSSVASVPG. A helical membrane pass occupies residues 296-322; that stretch reads MVGQLVGIMVVSCICWSPLLVLVVLAV. Topologically, residues 323–333 are extracellular; sequence GGWGSSSLQRP. Residues 334–355 traverse the membrane as a helical segment; sequence LFLAVRLASWNQILDPWVYILL. The Cytoplasmic portion of the chain corresponds to 356 to 403; it reads RQAVLRQLLRLLPPRPGAKGSPAGLALTRSAWEASSLRSSRHSSLSHL.

Belongs to the G-protein coupled receptor 1 family.

The protein localises to the cell membrane. In terms of biological role, receptor for prostaglandin E2 (PGE2). The activity of this receptor is mediated by G(q) proteins which activate a phosphatidylinositol-calcium second messenger system. May play a role as an important modulator of renal function. Implicated the smooth muscle contractile response to PGE2 in various tissues. This chain is Prostaglandin E2 receptor EP1 subtype (PTGER1), found in Canis lupus familiaris (Dog).